The following is a 490-amino-acid chain: MTQQTHFIAGQWHAGQGHDIESIDPAKKRQIWQAKSASSEQVNQAVSSARKATVTWAACTFEQRLAYVKRFGELLAENKDMLALTIAQETGKPLWETATEVGAMMGKIGISERAYQERTGLVENPMPVGKAFIRHKPHGVVAVFGPYNFPGHLPNGHIVPALLAGNCIVFKPSDLTPLVAERTVQLWEKAGLPKGVLNLVQGEVETGKALAAHPDLDGLFFTGSSRTGKILHEQYAGHPGKILALEMGGNNPLIVKDISDIDATVHDIIQSAFVTSGQRCTCARKLFLENNTQGDAILARLIEVTKNIKVGDYDADEQPFMGAMISKNAAHAMVMAQQQLLDLGATSLVELTHLDPESGFVSPGIIDVTAMVEQMPDDEHFGPLLKVVRFDDFDRAISLGNNTKFGLSAGLLSDSEDLYQHFYQRIRAGIVNWNRPITGASGAAPFGGVGESGNHRASAYYAADYCAYPVASVELEKVTLPGNLNPGLNF.

223–228 serves as a coordination point for NAD(+); that stretch reads GSSRTG. Catalysis depends on residues Glu246 and Cys280.

This sequence belongs to the aldehyde dehydrogenase family. AstD subfamily.

It catalyses the reaction N-succinyl-L-glutamate 5-semialdehyde + NAD(+) + H2O = N-succinyl-L-glutamate + NADH + 2 H(+). It participates in amino-acid degradation; L-arginine degradation via AST pathway; L-glutamate and succinate from L-arginine: step 4/5. Its function is as follows. Catalyzes the NAD-dependent reduction of succinylglutamate semialdehyde into succinylglutamate. The sequence is that of N-succinylglutamate 5-semialdehyde dehydrogenase from Pseudoalteromonas atlantica (strain T6c / ATCC BAA-1087).